We begin with the raw amino-acid sequence, 1153 residues long: ATP-dependent helicase/deoxyribonuclease subunit B (1153 aa).

Residues 1 to 289 enclose the UvrD-like helicase ATP-binding domain; that stretch reads MELNAYIGRA…KHLEQNFNAL (289 aa). 8 to 15 is a binding site for ATP; sequence GRAGTGKS. In terms of domain architecture, UvrD-like helicase C-terminal spans 269-583; it reads LDVQRFIHND…SIGTMDLAKV (315 aa). Positions 784, 1110, 1113, and 1119 each coordinate [4Fe-4S] cluster.

The protein belongs to the helicase family. AddB/RexB type 1 subfamily. In terms of assembly, heterodimer of AddA and AddB. Mg(2+) serves as cofactor. The cofactor is [4Fe-4S] cluster.

The heterodimer acts as both an ATP-dependent DNA helicase and an ATP-dependent, dual-direction single-stranded exonuclease. Recognizes the chi site generating a DNA molecule suitable for the initiation of homologous recombination. The AddB subunit has 5' -&gt; 3' nuclease activity but not helicase activity. The sequence is that of ATP-dependent helicase/deoxyribonuclease subunit B from Staphylococcus saprophyticus subsp. saprophyticus (strain ATCC 15305 / DSM 20229 / NCIMB 8711 / NCTC 7292 / S-41).